A 323-amino-acid chain; its full sequence is MAAQVEIEDQTSVTNLDNGEIFDSISDDADSSVSHAGSSFSSSSLILLGEGNPEHDVIKTCLLSGMGVVSSDTTIVTISKNSSERGITTRAKFLAFRIFTDAVARKHGGDANVKYGWYAGSRDEIQRIISYGFSNRDVGKFENDGGSHGIGIHLVPSKCSLLAASATEQDEEGLRYLLLCRVILGKPEIIISGSKQSYPSSAEFDSGVDDLHNPRNYVIWSCNMNSCILPSYIVSFRSPRLRVSRGGFASRPSSPWVSFASLMSMLSTSMDPSRMNLIIRTYDDFRKRKIRRDQLVRKMREVAGDNLLAEIIKNHKNRNKVTN.

Positions 31–257 constitute a PARP catalytic domain; that stretch reads SSVSHAGSSF…FASRPSSPWV (227 aa). The RST domain maps to 250 to 321; that stretch reads SRPSSPWVSF…IKNHKNRNKV (72 aa).

In terms of assembly, interacts with STO.

The protein resides in the nucleus. In terms of biological role, probable inactive ADP-ribosyltransferase that may be involved in stress and developmental responses. The protein is Probable inactive poly [ADP-ribose] polymerase SRO2 (SRO2) of Arabidopsis thaliana (Mouse-ear cress).